A 75-amino-acid chain; its full sequence is Small ribosomal subunit protein bS18 (75 aa).

The protein belongs to the bacterial ribosomal protein bS18 family. In terms of assembly, part of the 30S ribosomal subunit. Forms a tight heterodimer with protein bS6.

In terms of biological role, binds as a heterodimer with protein bS6 to the central domain of the 16S rRNA, where it helps stabilize the platform of the 30S subunit. The chain is Small ribosomal subunit protein bS18 from Aliivibrio fischeri (strain ATCC 700601 / ES114) (Vibrio fischeri).